The following is a 272-amino-acid chain: Orotidine 5'-phosphate decarboxylase (272 aa).

The active-site Proton donor is K92.

The protein belongs to the OMP decarboxylase family. Type 2 subfamily.

The catalysed reaction is orotidine 5'-phosphate + H(+) = UMP + CO2. Its pathway is pyrimidine metabolism; UMP biosynthesis via de novo pathway; UMP from orotate: step 2/2. The protein is Orotidine 5'-phosphate decarboxylase (pyrF) of Deinococcus radiodurans (strain ATCC 13939 / DSM 20539 / JCM 16871 / CCUG 27074 / LMG 4051 / NBRC 15346 / NCIMB 9279 / VKM B-1422 / R1).